The following is a 163-amino-acid chain: MPSFDIVSEITLYEIRNAVENANRVLSTRYDFRGVEATIELNEKAETIKVTTESDFQLEQLIEILISACVKRDIQHNSLDIPADSEHSGKLYSKEIKLKQGIETDMAKKIIKLIKDAKLKVQTQIQGEQVRVSGKSRDDLQATIQLVKNAELGQPFQFNNFRD.

It belongs to the YajQ family.

Functionally, nucleotide-binding protein. The protein is Nucleotide-binding protein HS_0688 of Histophilus somni (strain 129Pt) (Haemophilus somnus).